Here is a 205-residue protein sequence, read N- to C-terminus: Probable thymidylate kinase (205 aa).

7–14 (GIDGAGKS) is a binding site for ATP.

This sequence belongs to the thymidylate kinase family.

The enzyme catalyses dTMP + ATP = dTDP + ADP. This is Probable thymidylate kinase from Thermococcus onnurineus (strain NA1).